The primary structure comprises 689 residues: Glycine--tRNA ligase beta subunit (689 aa).

Belongs to the class-II aminoacyl-tRNA synthetase family. Tetramer of two alpha and two beta subunits.

The protein localises to the cytoplasm. It catalyses the reaction tRNA(Gly) + glycine + ATP = glycyl-tRNA(Gly) + AMP + diphosphate. In Lacticaseibacillus paracasei (strain ATCC 334 / BCRC 17002 / CCUG 31169 / CIP 107868 / KCTC 3260 / NRRL B-441) (Lactobacillus paracasei), this protein is Glycine--tRNA ligase beta subunit.